Reading from the N-terminus, the 168-residue chain is uncharacterized protein (168 aa).

CBS domains follow at residues Ile20–Leu77 and Met117–Ile168.

This is an uncharacterized protein from Methanocaldococcus jannaschii (strain ATCC 43067 / DSM 2661 / JAL-1 / JCM 10045 / NBRC 100440) (Methanococcus jannaschii).